The primary structure comprises 602 residues: Protein DGS1, mitochondrial (602 aa).

Transmembrane regions (helical) follow at residues L300–L320 and I465–V485.

Component of a mitochondrial large protein complex that contains, at least, MIC60, DGS1, TOM40 (e.g. TOM40-1), TOM20 proteins (e.g. TOM20-2), and petC/RISP.

Its subcellular location is the mitochondrion outer membrane. Its function is as follows. Involved in galactoglycerolipid biosynthesis. Contributes to an intracellular signal that regulates an alternative DGD1-independent galactoglycerolipid biosynthesis pathway in chloroplasts. Being involved in mitochondrial lipid homeostasis, modulates mitochondrion biogenesis and physiology, as well as stress responses. This Arabidopsis thaliana (Mouse-ear cress) protein is Protein DGS1, mitochondrial.